A 105-amino-acid chain; its full sequence is Large ribosomal subunit protein uL24 (105 aa).

It belongs to the universal ribosomal protein uL24 family. In terms of assembly, part of the 50S ribosomal subunit.

One of two assembly initiator proteins, it binds directly to the 5'-end of the 23S rRNA, where it nucleates assembly of the 50S subunit. Functionally, one of the proteins that surrounds the polypeptide exit tunnel on the outside of the subunit. This chain is Large ribosomal subunit protein uL24, found in Xylella fastidiosa (strain 9a5c).